A 156-amino-acid polypeptide reads, in one-letter code: Rhombotin-1 (156 aa).

LIM zinc-binding domains lie at 22 to 84 (KGCA…LFGT) and 86 to 148 (GNCA…GHLN).

In terms of tissue distribution, expressed in the brain and not in the thymus.

The protein localises to the nucleus. Its function is as follows. May be involved in gene regulation within neural lineage cells potentially by direct DNA binding or by binding to other transcription factors. The polypeptide is Rhombotin-1 (Lmo1) (Mus musculus (Mouse)).